Consider the following 694-residue polypeptide: Ferric reductase transmembrane component 5 (694 aa).

Residues 1–19 (MLFARLVLLLVYLAPGSLA) form the signal peptide. Residues 20-163 (KPASTKKRTQ…LDNIDKGNVY (144 aa)) are Extracellular-facing. Residue N117 is glycosylated (N-linked (GlcNAc...) asparagine). Residues 164–184 (GVTICLYWIGVLFIAAVYHFL) traverse the membrane as a helical segment. Residues 185 to 222 (NFSRLKQTVFKNKVSAFLRGHYVLPALVHNHAMSVGRW) are Cytoplasmic-facing. The helical transmembrane segment at 223 to 243 (FFIGLVPTRLETLVLFGYVLL) threads the bilayer. Residues 244–267 (HGFLLSSYNFDHNELLSDRRSQVL) are Extracellular-facing. The chain crosses the membrane as a helical span at residues 268 to 288 (IFLSDRAGILAFAHFPLIVLF). Residues 274 to 408 (AGILAFAHFP…GWGEWIMACA (135 aa)) enclose the Ferric oxidoreductase domain. Residues 289–311 (GGKNSTMTWLTGIRYTAFITYHK) are Cytoplasmic-facing. H310 and H324 together coordinate heme. Residues 312 to 334 (WLGRFMLVDCTIHAIGYTYHAYI) traverse the membrane as a helical segment. Residues 335 to 347 (ENYWKYVKYSDLW) lie on the Extracellular side of the membrane. A helical membrane pass occupies residues 348-368 (TSGRHAMIIVGILVFFSFFFF). Over 369 to 371 (RRH) the chain is Cytoplasmic. The helical transmembrane segment at 372–392 (YYELFVITHIILAIGFFHACW) threads the bilayer. Residues H380 and H394 each contribute to the heme site. The Extracellular segment spans residues 393–403 (KHCYKLGWGEW). A helical membrane pass occupies residues 404 to 424 (IMACALFWIADRILRLIKIAI). One can recognise an FAD-binding FR-type domain in the interval 409-528 (LFWIADRILR…EGPYGQSTRT (120 aa)). Residues 425–694 (FGMPWAKLKL…IEYVEEFQNW (270 aa)) are Cytoplasmic-facing. 473–479 (HPFTVMD) contributes to the FAD binding site. NADP(+) is bound by residues 520–523 (GPYG) and 660–661 (CG).

Belongs to the ferric reductase (FRE) family. The cofactor is FAD.

The protein resides in the cell membrane. It catalyses the reaction 2 a Fe(II)-siderophore + NADP(+) + H(+) = 2 a Fe(III)-siderophore + NADPH. Metalloreductase responsible for reducing extracellular iron and copper prior to import. Catalyzes the reductive uptake of Fe(3+)-salts and Fe(3+) bound to catecholate or hydroxamate siderophores. Fe(3+) is reduced to Fe(2+), which then dissociates from the siderophore and can be imported by the high-affinity Fe(2+) transport complex in the plasma membrane. In Saccharomyces cerevisiae (strain ATCC 204508 / S288c) (Baker's yeast), this protein is Ferric reductase transmembrane component 5 (FRE5).